A 293-amino-acid chain; its full sequence is Fructokinase (293 aa).

Thr133 lines the ATP pocket. His156, Cys174, His177, and Cys180 together coordinate Zn(2+). Residues Pro188 and 236–240 (GVMAQ) each bind ATP.

It belongs to the ROK (NagC/XylR) family. Mg(2+) serves as cofactor.

It catalyses the reaction D-fructose + ATP = D-fructose 6-phosphate + ADP + H(+). Inhibition by zinc ions. In Streptococcus mutans serotype c (strain ATCC 700610 / UA159), this protein is Fructokinase (scrK).